We begin with the raw amino-acid sequence, 182 residues long: WUSCHEL-related homeobox 5 (182 aa).

The tract at residues 1-24 (MSFSVKGRSLRGNNNGGTGTKCGR) is disordered. Residues 20–84 (TKCGRWNPTV…NHKARERQKR (65 aa)) constitute a DNA-binding region (homeobox; WUS-type).

This sequence belongs to the WUS homeobox family. In terms of tissue distribution, specifically expressed in the central cells of a quiescent center (QC) of the root.

It is found in the nucleus. Functionally, transcription factor, which may be involved in the specification and maintenance of the stem cells (QC cells) in the root apical meristem (RAM). The polypeptide is WUSCHEL-related homeobox 5 (WOX5) (Arabidopsis thaliana (Mouse-ear cress)).